The following is a 344-amino-acid chain: Beta-1,4-galactosyltransferase 4 (344 aa).

The Cytoplasmic segment spans residues 1-12 (MGCNPPYHLSYR). Residues 13–38 (LRLLLLFTLCLTVVGWATSNYFVGAI) form a helical; Signal-anchor for type II membrane protein membrane-spanning segment. Topologically, residues 39–344 (QVIPKAKDFM…NITVDFWTAA (306 aa)) are lumenal. A disulfide bridge connects residues Cys-77 and Cys-118. UDP-alpha-D-galactose contacts are provided by residues 129-133 (PHRNR), 168-170 (FNR), and 195-196 (VD). Cysteines 189 and 208 form a disulfide. Asp-196 contributes to the Mn(2+) binding site. N-linked (GlcNAc...) asparagine glycosylation is present at Asn-220. The UDP-alpha-D-galactose site is built by Tyr-224 and Trp-256. 258–261 (GEDD) serves as a coordination point for N-acetyl-D-glucosamine. Residue His-289 participates in Mn(2+) binding. 289–291 (HTR) provides a ligand contact to UDP-alpha-D-galactose. Arg-301 is an N-acetyl-D-glucosamine binding site. An N-linked (GlcNAc...) asparagine glycan is attached at Asn-335.

It belongs to the glycosyltransferase 7 family. As to quaternary structure, interacts with SLC35A2/UGT1. Mn(2+) is required as a cofactor.

The protein localises to the golgi apparatus membrane. It is found in the secreted. It catalyses the reaction N-acetyl-D-glucosamine + UDP-alpha-D-galactose = beta-D-galactosyl-(1-&gt;4)-N-acetyl-D-glucosamine + UDP + H(+). The catalysed reaction is a beta-D-GlcNAc-(1-&gt;3)-beta-D-Gal-(1-&gt;4)-beta-D-Glc-(1&lt;-&gt;1)-Cer(d18:1(4E)) + UDP-alpha-D-galactose = a neolactoside nLc4Cer(d18:1(4E)) + UDP + H(+). It carries out the reaction 3-O-{beta-D-galactosyl-(1-&gt;3)-[6-O-sulfo-N-acetyl-beta-D-glucosaminyl-(1-&gt;6)]-N-acetyl-alpha-D-galactosaminyl}-L-seryl-[protein] + UDP-alpha-D-galactose = 3-O-{beta-D-galactosyl-(1-&gt;3)-[beta-D-galactosyl-(1-&gt;4)-6-O-sulfo-N-acetyl-beta-D-glucosaminyl-(1-&gt;6)]-N-acetyl-alpha-D-galactosaminyl}-L-seryl-[protein] + UDP + H(+). The enzyme catalyses 3-O-{beta-D-galactosyl-(1-&gt;3)-[6-O-sulfo-N-acetyl-beta-D-glucosaminyl-(1-&gt;6)]-N-acetyl-alpha-D-galactosaminyl}-L-threonyl-[protein] + UDP-alpha-D-galactose = 3-O-{beta-D-galactosyl-(1-&gt;3)-[beta-D-galactosyl-(1-&gt;4)-6-O-sulfo-N-acetyl-beta-D-glucosaminyl-(1-&gt;6)]-N-acetyl-alpha-D-galactosaminyl}-L-threonyl-[protein] + UDP + H(+). Its pathway is protein modification; protein glycosylation. It functions in the pathway glycolipid biosynthesis. Functionally, galactose (Gal) transferase involved in the synthesis of terminal N-acetyllactosamine (LacNac) unit present on glycan chains of glycoproteins and glycosphingolipids. Catalyzes the transfer of Gal residue via a beta1-&gt;4 linkage from UDP-Gal to the non-reducing terminal N-acetyl glucosamine 6-O-sulfate (6-O-sulfoGlcNAc) in the linearly growing chain of both N- and O-linked keratan sulfate proteoglycans. Cooperates with B3GNT7 N-acetyl glucosamine transferase and CHST6 and CHST1 sulfotransferases to construct and elongate mono- and disulfated disaccharide units [-&gt;3Galbeta1-&gt;4(6-sulfoGlcNAcbeta)1-&gt;] and [-&gt;3(6-sulfoGalbeta)1-&gt;4(6-sulfoGlcNAcbeta)1-&gt;] within keratan sulfate polymer. Transfers Gal residue via a beta1-&gt;4 linkage to terminal 6-O-sulfoGlcNAc within the LacNac unit of core 2 O-glycans forming 6-sulfo-sialyl-Lewis X (sLex). May contribute to the generation of sLex epitope on mucin-type glycoproteins that serve as ligands for SELL/L-selectin, a major regulator of leukocyte migration. In the biosynthesis pathway of neolacto-series glycosphingolipids, transfers Gal residue via a beta1-&gt;4 linkage to terminal GlcNAc of a lactotriaosylceramide (Lc3Cer) acceptor to form a neolactotetraosylceramide. The protein is Beta-1,4-galactosyltransferase 4 of Mus musculus (Mouse).